We begin with the raw amino-acid sequence, 441 residues long: Malate dehydrogenase [NADP], chloroplastic (441 aa).

Residues 1-58 (MALTQLNSTCSKPQLHSSSQLSFLSRTRTRTLPRHYHSTFAPLHRTQHARISCSVAPN) constitute a chloroplast transit peptide. Cysteines 76 and 81 form a disulfide. 105–111 (GAAGMIS) lines the NADP(+) pocket. 2 residues coordinate substrate: Arg186 and Arg192. Asn199 contacts NADP(+). Gln206 contributes to the NAD(+) binding site. Residue 223–225 (VGN) coordinates NADP(+). Substrate contacts are provided by Asn225 and Arg256. Residue His281 is the Proton acceptor of the active site. A disulfide bridge links Cys417 with Cys429.

The protein belongs to the LDH/MDH superfamily. MDH type 2 family. In terms of assembly, homodimer.

It is found in the plastid. The protein localises to the chloroplast. The enzyme catalyses (S)-malate + NADP(+) = oxaloacetate + NADPH + H(+). Its activity is regulated as follows. Chloroplast NADP-MDH is activated upon illumination. In order to be enzymatically active, disulfide bridges on the protein must be reduced by thioredoxin which receives electrons from ferredoxin and the electron transport system of photosynthesis. Functionally, the chloroplastic, NADP-dependent form is essential for the photosynthesis C4 cycle, which allows plants to circumvent the problem of photorespiration. In C4 plants, NADP-MDH activity acts to convert oxaloacetate to malate in chloroplasts of mesophyll cells for transport to the bundle sheath cells. The sequence is that of Malate dehydrogenase [NADP], chloroplastic from Pisum sativum (Garden pea).